The sequence spans 192 residues: 7-methyl-GTP pyrophosphatase (192 aa).

Asp69 serves as the catalytic Proton acceptor.

The protein belongs to the Maf family. YceF subfamily. A divalent metal cation serves as cofactor.

The protein localises to the cytoplasm. The catalysed reaction is N(7)-methyl-GTP + H2O = N(7)-methyl-GMP + diphosphate + H(+). Its function is as follows. Nucleoside triphosphate pyrophosphatase that hydrolyzes 7-methyl-GTP (m(7)GTP). May have a dual role in cell division arrest and in preventing the incorporation of modified nucleotides into cellular nucleic acids. This is 7-methyl-GTP pyrophosphatase from Pseudomonas savastanoi pv. phaseolicola (strain 1448A / Race 6) (Pseudomonas syringae pv. phaseolicola (strain 1448A / Race 6)).